Here is a 66-residue protein sequence, read N- to C-terminus: Large ribosomal subunit protein uL29 (66 aa).

It belongs to the universal ribosomal protein uL29 family.

The sequence is that of Large ribosomal subunit protein uL29 from Roseiflexus castenholzii (strain DSM 13941 / HLO8).